A 412-amino-acid polypeptide reads, in one-letter code: Trehalose synthase (412 aa).

This sequence belongs to the glycosyltransferase group 1 family. Glycosyltransferase 4 subfamily. In terms of assembly, homodimer. It depends on Mg(2+) as a cofactor.

The enzyme catalyses an NDP-alpha-D-glucose + D-glucose = alpha,alpha-trehalose + a ribonucleoside 5'-diphosphate + H(+). Its function is as follows. Synthesizes trehalose from ADP-glucose and glucose. Has a much lower activity toward UDP-glucose and GDP-glucose. The reaction is reversible, the equilibrium strongly favors trehalose synthesis. In Pyrococcus furiosus (strain ATCC 43587 / DSM 3638 / JCM 8422 / Vc1), this protein is Trehalose synthase.